A 97-amino-acid chain; its full sequence is MANNKSAKKRIKIAERNRLINKSYKSTVRTLTKKTLENCEKYKKDPNDENKDLVKTSLNKAFSLIDKAVKKNVLHKNNGANRKSKINNLVKTTLATQ.

It belongs to the bacterial ribosomal protein bS20 family.

In terms of biological role, binds directly to 16S ribosomal RNA. In Prochlorococcus marinus (strain MIT 9312), this protein is Small ribosomal subunit protein bS20.